Consider the following 153-residue polypeptide: MKTSIVERPAQHWVGYRLQGPWQETVPQGFAQLKDWVARHALQGEWMAIYYGNPQVVPPQELSVETVLTVPADFALAVGEGIQHGTLAGGHYFHTCTEVQNNDFFSAWNAFFAQLQQRSDWQVDDRPCYEHYLSDGSQSGNWLLNMYIPVRPV.

The protein belongs to the DNA gyrase inhibitor family. As to quaternary structure, interacts with DNA gyrase.

Its subcellular location is the cytoplasm. Functionally, inhibits the supercoiling activity of DNA gyrase. Acts by inhibiting DNA gyrase at an early step, prior to (or at the step of) binding of DNA by the gyrase. It protects cells against toxins that target DNA gyrase, by inhibiting activity of these toxins and reducing the formation of lethal double-strand breaks in the cell. This chain is DNA gyrase inhibitor, found in Pantoea sp. (strain At-9b).